The primary structure comprises 217 residues: Lectin ADEL (217 aa).

Disulfide bonds link cysteine 5/cysteine 187, cysteine 42/cysteine 68, cysteine 61/cysteine 77, cysteine 114/cysteine 135, and cysteine 142/cysteine 206. Residue asparagine 30 is glycosylated (N-linked (GlcNAc...) asparagine). Asparagine 102 and asparagine 126 each carry an N-linked (GlcNAc...) asparagine glycan.

In terms of assembly, homodimer; disulfide-linked. Post-translationally, contains disulfide bonds.

In terms of biological role, binds in decreasing order of affinity: galacturonic acid, D-galactosamine, methyl-alpha-D-galactopyranoside and further galactose-containing carbohydrates. Has hemagglutinating activity against human and rabbit erythrocytes. The polypeptide is Lectin ADEL (Aplysia dactylomela (Spotted sea hare)).